An 870-amino-acid chain; its full sequence is DNA mismatch repair protein MutS (870 aa).

Residue 620 to 627 coordinates ATP; it reads GPNMAGKS.

It belongs to the DNA mismatch repair MutS family.

Functionally, this protein is involved in the repair of mismatches in DNA. It is possible that it carries out the mismatch recognition step. This protein has a weak ATPase activity. This chain is DNA mismatch repair protein MutS, found in Syntrophotalea carbinolica (strain DSM 2380 / NBRC 103641 / GraBd1) (Pelobacter carbinolicus).